Here is a 679-residue protein sequence, read N- to C-terminus: Altered inheritance of mitochondria protein 21 (679 aa).

A disordered region spans residues 1 to 85 (MPSEVTPKVP…LQRPVRRSTT (85 aa)). Positions 9–19 (VPERPSRRKTS) are enriched in basic and acidic residues. Thr-18 carries the phosphothreonine modification. Ser-36 is subject to Phosphoserine. Phosphothreonine is present on Thr-58. Ser-70 carries the phosphoserine modification. Thr-85 is modified (phosphothreonine). Ser-104 carries the phosphoserine modification. The segment covering 110-119 (NIHNVSRKKS) has biased composition (basic residues). Disordered regions lie at residues 110-522 (NIHN…EKIE), 549-580 (IDTT…PNKM), and 593-679 (EKLP…FHSL). 2 stretches are compositionally biased toward polar residues: residues 133–149 (QNGQ…TNPS) and 164–178 (SAIS…SNNE). The segment covering 179 to 213 (VTEHSDSEDLTEKQKVHAALDNEAGDRSHFEEKLI) has biased composition (basic and acidic residues). Residues Ser-183, Ser-206, and Ser-231 each carry the phosphoserine modification. The segment covering 243–272 (SDDKAEKFTKHPESSLEELQKHQEQQEEKI) has biased composition (basic and acidic residues). Residue Thr-277 is modified to Phosphothreonine. Ser-284 is modified (phosphoserine). Residues 296–323 (EVNSQPQGPSDTETVIAATSSNVPSQIA) show a composition bias toward polar residues. Phosphoserine is present on Ser-324. Basic and acidic residues-rich tracts occupy residues 339–361 (KKDF…RVSE) and 372–383 (EESKIPKIPSER). The tract at residues 383 to 396 (RPKRRAPPPVPKKP) is interaction with SH3 domain of ABP1. Composition is skewed to polar residues over residues 414 to 427 (DLHN…TTAS) and 437 to 452 (SSIT…TSKL). A compositionally biased stretch (basic and acidic residues) spans 471 to 482 (LEKKLSSPDTES). Residues 501–512 (RRGRGPRGRKLP) show a composition bias toward basic residues. The residue at position 552 (Thr-552) is a Phosphothreonine. Basic and acidic residues predominate over residues 556–576 (QAERALDEKSKSIPEEQREQS). Ser-576 is modified (phosphoserine). Residues 603 to 613 (PLSQLPQTNAV) show a composition bias toward polar residues. Ser-620, Ser-623, Ser-625, Ser-627, Ser-667, Ser-671, Ser-675, and Ser-678 each carry phosphoserine. Residues 667–679 (SALHSEEASFHSL) are compositionally biased toward basic and acidic residues.

Belongs to the AIM21 family. As to quaternary structure, interacts with ribosomes. Interacts with ABP1.

Its subcellular location is the cytoplasm. It is found in the cytoskeleton. The protein localises to the actin patch. Its function is as follows. Involved in mitochondrial migration along actin filaments. This is Altered inheritance of mitochondria protein 21 (AIM21) from Saccharomyces cerevisiae (strain ATCC 204508 / S288c) (Baker's yeast).